The following is a 351-amino-acid chain: Dihydroorotate dehydrogenase (quinone) (351 aa).

Residues 61–65 (AGLDK) and threonine 85 contribute to the FMN site. Lysine 65 contacts substrate. 110-114 (NRMGF) is a binding site for substrate. Positions 139 and 172 each coordinate FMN. Residue asparagine 172 coordinates substrate. Catalysis depends on serine 175, which acts as the Nucleophile. Asparagine 177 is a binding site for substrate. Positions 217 and 245 each coordinate FMN. 246-247 (NT) is a substrate binding site. FMN-binding positions include glycine 268, glycine 297, and 318–319 (YS).

It belongs to the dihydroorotate dehydrogenase family. Type 2 subfamily. In terms of assembly, monomer. The cofactor is FMN.

It localises to the cell membrane. It carries out the reaction (S)-dihydroorotate + a quinone = orotate + a quinol. The protein operates within pyrimidine metabolism; UMP biosynthesis via de novo pathway; orotate from (S)-dihydroorotate (quinone route): step 1/1. Catalyzes the conversion of dihydroorotate to orotate with quinone as electron acceptor. This chain is Dihydroorotate dehydrogenase (quinone), found in Xanthomonas oryzae pv. oryzae (strain MAFF 311018).